Reading from the N-terminus, the 302-residue chain is 4-hydroxy-tetrahydrodipicolinate synthase (302 aa).

A pyruvate-binding site is contributed by threonine 55. Tyrosine 144 acts as the Proton donor/acceptor in catalysis. Catalysis depends on lysine 172, which acts as the Schiff-base intermediate with substrate. Residue valine 214 participates in pyruvate binding.

It belongs to the DapA family. In terms of assembly, homotetramer; dimer of dimers.

It is found in the cytoplasm. The enzyme catalyses L-aspartate 4-semialdehyde + pyruvate = (2S,4S)-4-hydroxy-2,3,4,5-tetrahydrodipicolinate + H2O + H(+). The protein operates within amino-acid biosynthesis; L-lysine biosynthesis via DAP pathway; (S)-tetrahydrodipicolinate from L-aspartate: step 3/4. Its function is as follows. Catalyzes the condensation of (S)-aspartate-beta-semialdehyde [(S)-ASA] and pyruvate to 4-hydroxy-tetrahydrodipicolinate (HTPA). This chain is 4-hydroxy-tetrahydrodipicolinate synthase, found in Prochlorococcus marinus (strain MIT 9313).